We begin with the raw amino-acid sequence, 202 residues long: Transmembrane 4 L6 family member 1 (202 aa).

The Cytoplasmic segment spans residues 1 to 9; the sequence is MCYVKCARY. Residues 10–30 traverse the membrane as a helical segment; it reads IGYSLVWAAVFCIVANALLYF. At 31 to 49 the chain is on the extracellular side; it reads PNGETKYATEDHLSRFVWY. A helical membrane pass occupies residues 50-70; the sequence is FAGIVGGGLLMLLPAFVFIGM. Residues 71 to 93 lie on the Cytoplasmic side of the membrane; the sequence is DEEDCCGCCGYENYGKRCSMLSS. Residues 94-114 traverse the membrane as a helical segment; sequence VLAALIGIVGSAYCVIVASLG. The Extracellular portion of the chain corresponds to 115-161; it reads LAEGPKCSDAHGVWNYTFASTEGQYLLNSSMWSKCYEPKHIVEWHVT. N-linked (GlcNAc...) asparagine glycans are attached at residues asparagine 129 and asparagine 142. Residues 162-182 form a helical membrane-spanning segment; it reads LFSILLAFAAVEFILCLIQVI. The Cytoplasmic segment spans residues 183-202; sequence NGMLGGLCGYCCSRQQQYNC.

This sequence belongs to the L6 tetraspanin family. In terms of assembly, present in high molecular weight complexes in tumor cells. Interacts with SDCBP2. As to expression, highly expressed in skin and lung. Moderately expressed in lymph nodes and kidneys. Also present in thymic stroma and fibroblasts.

The protein localises to the membrane. This Mus musculus (Mouse) protein is Transmembrane 4 L6 family member 1 (Tm4sf1).